The chain runs to 141 residues: Sec-independent protein translocase protein TatB (141 aa).

The helical transmembrane segment at 1-21 (MFGISFSELLLVGLVALLVLG) threads the bilayer. The segment at 74–141 (EAQKLLAPLT…SPPSETPRNP (68 aa)) is disordered. Positions 89–115 (QETPPPAAESPAPSVPTPPPTSTPAVP) are enriched in pro residues. The segment covering 116–129 (PADAAAPPAVAAST) has biased composition (low complexity). Over residues 130-141 (PPSPPSETPRNP) the composition is skewed to pro residues.

This sequence belongs to the TatB family. As to quaternary structure, the Tat system comprises two distinct complexes: a TatABC complex, containing multiple copies of TatA, TatB and TatC subunits, and a separate TatA complex, containing only TatA subunits. Substrates initially bind to the TatABC complex, which probably triggers association of the separate TatA complex to form the active translocon.

Its subcellular location is the cell inner membrane. Functionally, part of the twin-arginine translocation (Tat) system that transports large folded proteins containing a characteristic twin-arginine motif in their signal peptide across membranes. Together with TatC, TatB is part of a receptor directly interacting with Tat signal peptides. TatB may form an oligomeric binding site that transiently accommodates folded Tat precursor proteins before their translocation. The protein is Sec-independent protein translocase protein TatB of Pseudomonas aeruginosa (strain ATCC 15692 / DSM 22644 / CIP 104116 / JCM 14847 / LMG 12228 / 1C / PRS 101 / PAO1).